Consider the following 232-residue polypeptide: Large ribosomal subunit protein uL1 (232 aa).

Belongs to the universal ribosomal protein uL1 family. As to quaternary structure, part of the 50S ribosomal subunit.

Its function is as follows. Binds directly to 23S rRNA. The L1 stalk is quite mobile in the ribosome, and is involved in E site tRNA release. Protein L1 is also a translational repressor protein, it controls the translation of the L11 operon by binding to its mRNA. This chain is Large ribosomal subunit protein uL1, found in Xylella fastidiosa (strain 9a5c).